The primary structure comprises 212 residues: Methylthioribulose-1-phosphate dehydratase (212 aa).

Zn(2+) contacts are provided by histidine 97 and histidine 99.

Belongs to the aldolase class II family. MtnB subfamily. As to quaternary structure, homotetramer. The cofactor is Zn(2+).

The enzyme catalyses 5-(methylsulfanyl)-D-ribulose 1-phosphate = 5-methylsulfanyl-2,3-dioxopentyl phosphate + H2O. It functions in the pathway amino-acid biosynthesis; L-methionine biosynthesis via salvage pathway; L-methionine from S-methyl-5-thio-alpha-D-ribose 1-phosphate: step 2/6. In terms of biological role, catalyzes the dehydration of methylthioribulose-1-phosphate (MTRu-1-P) into 2,3-diketo-5-methylthiopentyl-1-phosphate (DK-MTP-1-P). The polypeptide is Methylthioribulose-1-phosphate dehydratase (Bacillus thuringiensis (strain Al Hakam)).